A 357-amino-acid chain; its full sequence is Peptide chain release factor 1 (357 aa).

Position 234 is an N5-methylglutamine (Q234).

The protein belongs to the prokaryotic/mitochondrial release factor family. In terms of processing, methylated by PrmC. Methylation increases the termination efficiency of RF1.

It localises to the cytoplasm. Peptide chain release factor 1 directs the termination of translation in response to the peptide chain termination codons UAG and UAA. The polypeptide is Peptide chain release factor 1 (Alkaliphilus oremlandii (strain OhILAs) (Clostridium oremlandii (strain OhILAs))).